Here is a 386-residue protein sequence, read N- to C-terminus: L-olivosyl-oleandolide 3-O-methyltransferase (386 aa).

S-adenosyl-L-methionine is bound by residues serine 166, 195 to 201 (EIGIGGY), serine 210, aspartate 227, 245 to 246 (RQ), and aspartate 268. A Mg(2+)-binding site is contributed by aspartate 268. The active-site Proton acceptor is the histidine 271. The Mg(2+) site is built by glutamate 296 and aspartate 297. The segment at 364-386 (RRAINKEGGIPHTVPREPFWNDN) is disordered.

Belongs to the methyltransferase OleY/MycE family. As to quaternary structure, homodimer. It depends on Mg(2+) as a cofactor.

The catalysed reaction is L-olivosyl-oleandolide + S-adenosyl-L-methionine = L-oleandrosyl-oleandolide + S-adenosyl-L-homocysteine + H(+). It participates in antibiotic biosynthesis. In terms of biological role, 3-O-methyltransferase involved in the synthesis of L-oleandrose, a sugar attached to oleandomycin, a macrolide antibiotic. Acts on monoglycosylated macrolactones and mediates the conversion of L-olivosyl-erythronolide B into its 3-O-methylated derivative, L-oleandrosyl-erythronolide B. Also able to methylate other monoglycosylated derivatives, such as L-rhamnosyl- and L-mycarosyl-erythronolide B. The chain is L-olivosyl-oleandolide 3-O-methyltransferase (oleY) from Streptomyces antibioticus.